Here is a 190-residue protein sequence, read N- to C-terminus: MNKDAYIQMFKDTNALLEGHFLLSSGKHSAKYLQCAKVLQYPNLAEMICSDLAQHFKDQQIDVVIGPALGAVTLSYELARQLNCRSIFAEREDGIMKLRRGFKIEEGEKVLVVEDVITTGGSVREIIEIVKEYRGEVVAVAGIVDRSGGKVDLGYPLKTLLTLEIETFEPEECPLCREGIPIVKPGSRKK.

114–122 (EDVITTGGS) contributes to the 5-phospho-alpha-D-ribose 1-diphosphate binding site. Orotate contacts are provided by threonine 118 and arginine 146.

It belongs to the purine/pyrimidine phosphoribosyltransferase family. PyrE subfamily. As to quaternary structure, homodimer. It depends on Mg(2+) as a cofactor.

It carries out the reaction orotidine 5'-phosphate + diphosphate = orotate + 5-phospho-alpha-D-ribose 1-diphosphate. It functions in the pathway pyrimidine metabolism; UMP biosynthesis via de novo pathway; UMP from orotate: step 1/2. In terms of biological role, catalyzes the transfer of a ribosyl phosphate group from 5-phosphoribose 1-diphosphate to orotate, leading to the formation of orotidine monophosphate (OMP). In Caldicellulosiruptor bescii (strain ATCC BAA-1888 / DSM 6725 / KCTC 15123 / Z-1320) (Anaerocellum thermophilum), this protein is Orotate phosphoribosyltransferase.